Reading from the N-terminus, the 332-residue chain is Malate dehydrogenase, cytoplasmic (332 aa).

NAD(+)-binding positions include 16 to 17 (QI), D43, and G90. An oxaloacetate-binding site is contributed by R99. 2 residues coordinate NAD(+): Q113 and N132. Residues N132, R163, H188, and S243 each contribute to the oxaloacetate site. The Proton acceptor role is filled by H188.

The protein belongs to the LDH/MDH superfamily. MDH type 2 family. Homodimer.

Its subcellular location is the cytoplasm. It catalyses the reaction (S)-malate + NAD(+) = oxaloacetate + NADH + H(+). The polypeptide is Malate dehydrogenase, cytoplasmic (NR1) (Beta vulgaris (Sugar beet)).